A 417-amino-acid polypeptide reads, in one-letter code: L-rhamnose isomerase (417 aa).

Residues H261, D293, and D295 each coordinate Mn(2+).

The protein belongs to the rhamnose isomerase family. It depends on Mn(2+) as a cofactor.

Its subcellular location is the cytoplasm. The catalysed reaction is L-rhamnopyranose = L-rhamnulose. The protein operates within carbohydrate degradation; L-rhamnose degradation; glycerone phosphate from L-rhamnose: step 1/3. Functionally, catalyzes the interconversion of L-rhamnose and L-rhamnulose. This is L-rhamnose isomerase from Oceanobacillus iheyensis (strain DSM 14371 / CIP 107618 / JCM 11309 / KCTC 3954 / HTE831).